Reading from the N-terminus, the 185-residue chain is Peptidyl-tRNA hydrolase (185 aa).

Tyr14 contributes to the tRNA binding site. His19 acts as the Proton acceptor in catalysis. Residues Phe64, Asn66, and Asn112 each coordinate tRNA.

Belongs to the PTH family. In terms of assembly, monomer.

Its subcellular location is the cytoplasm. It carries out the reaction an N-acyl-L-alpha-aminoacyl-tRNA + H2O = an N-acyl-L-amino acid + a tRNA + H(+). Functionally, hydrolyzes ribosome-free peptidyl-tRNAs (with 1 or more amino acids incorporated), which drop off the ribosome during protein synthesis, or as a result of ribosome stalling. Its function is as follows. Catalyzes the release of premature peptidyl moieties from peptidyl-tRNA molecules trapped in stalled 50S ribosomal subunits, and thus maintains levels of free tRNAs and 50S ribosomes. The polypeptide is Peptidyl-tRNA hydrolase (Latilactobacillus sakei subsp. sakei (strain 23K) (Lactobacillus sakei subsp. sakei)).